A 687-amino-acid polypeptide reads, in one-letter code: DnaJ protein ERDJ2A (687 aa).

Topologically, residues 1 to 8 (MAASEENS) are lumenal. Residues 9–29 (ALFPIFILTIMAIPLVPYTMV) traverse the membrane as a helical segment. Topologically, residues 30–65 (KLSGALSKKQRTIHCQCLECDRSGKYKRSLFKKISN) are cytoplasmic. Residues 66 to 86 (FSTWSNLTLVLLWVVMIFLIY) form a helical membrane-spanning segment. Residues 87-190 (YTKNMSREAQ…FLLDIDGASG (104 aa)) lie on the Lumenal side of the membrane. Asn-90 carries an N-linked (GlcNAc...) asparagine glycan. A J domain is found at 99 to 164 (DPFSILGLEP…VSRENFEKYG (66 aa)). Residues 191–211 (GILLLWIVGVCILLPLVIAVI) form a helical membrane-spanning segment. Residues 205 to 603 (PLVIAVIYLS…IGCDKKQALK (399 aa)) enclose the SEC63 domain. Over 212–687 (YLSRSSKYTG…SSEESGSEEE (476 aa)) the chain is Cytoplasmic. The interval 619–687 (SDEGAIAEEG…SSEESGSEEE (69 aa)) is disordered. Residues 623 to 654 (AIAEEGMEEEDEIEEEDYDDDYESEYSEDEDE) are compositionally biased toward acidic residues.

As to quaternary structure, interacts with OEP61/TPR7. Expressed in leaves, flower buds and flowers.

It localises to the endoplasmic reticulum membrane. Its function is as follows. Required for integral membrane and secreted preprotein translocation across the endoplasmic reticulum membrane. This Arabidopsis thaliana (Mouse-ear cress) protein is DnaJ protein ERDJ2A (ERDJ2A).